We begin with the raw amino-acid sequence, 273 residues long: MPANRSSDDSTLHLPRILCLHGGGTNARIFRAQCRILTRYLSTAFRLCFAEAPFLSQPGPDVTSVYKEFGPFKRWLRSSARDHPEIDPALATEAIDASLRDAMDEDDRRGATGEWAGLLGFSQGAKMCASLLLRQQVRDATRTSPSARDGPNWRFAVLLAGRGPLVSLDPACLTSPAVVDAGGIAMTAFPDERLLAAGTAHVLRLPTVHVHGMLDPGLEEHRKLLAQYCEEGTARVMEWEGNHRVPIKTKDVVALVGHVLEVATETGVLQRRI.

Active-site charge relay system residues include Ser-122, Asp-215, and His-243.

Belongs to the LovG family.

The protein operates within secondary metabolite biosynthesis. Its function is as follows. Esterase; part of the gene cluster that mediates the biosynthesis of azaphilone pigments (MonAzPs), a complex mixture of compounds with a common azaphilone skeleton very widely used as food colorants. Within the pathway, pigG may assist the nrPKS pigA in the biosynthesis of the hexaketide precursor. The first step of the pathway is performed by the nrPKS pigA that forms the hexaketide precursor from successive condensations of five malonyl-CoA units, with a simple acetyl-CoA starter unit. The role of esterase pigG is not clear, but it may play at most a supplementary role in the formation of the benzaldehyde produced by the pigA nrPKS. This very reactive benzaldehyde is intercepted by the pigC ketoreductase that to provide the first stable enzyme-free MonAzPs intermediate, 6-(4-hydroxy-2-oxopentyl)-3-methyl-2,4-dioxocyclohexane carbaldehyde, also known as M7PKS-1. The FAD-dependent monooxygenase pigN hydroxylates M7PKS-1 at C-4, which triggers the formation of the pyran ring. PigJ, pigK and pigD are involved in the acetylation of the pyran ring. PigJ and pigK form the two subunits of a dedicated fungal FAS that produces the side chain fatty acyl moiety of MonAzPs and pigD transfers the fatty acyl chain to the C-4 alcohol. PigM and pigO are involved in the elimination of the omega-1 alcohol. PigM acts as an O-acetyltransferase that synthesizes the putative O-11 acetyl intermediate whereas pigO eliminates acetic acid to yield an intermediate with a C10(11) double bond. The dehydration of the C-11 alcohol followed by the reduction of the C6(7) double bond by the NAD(P)H-dependent oxidoreductase pigE increases the electrophilicity of the C-5 ketone of the resulting acyl benzopyran. This in turn sets up the C-5 ketone for an intramolecular Knoevenagel aldol condensation with the C-20 enol of the side chain. This condensation affords the characteristic linear tricyclic carbon skeletons of the yellow pigments that serve as the common precursors for the classical yellow pigments monascin and ankaflavin, orange pigments rubopunctatin and monascorubrin, and red pigments ribropunctamine and monascorubramine. The FAD-dependent oxidoreductase pigF is especially invoved in the biosynthesis of orange and red pigments via desaturation of C6(7). The polypeptide is Esterase pigG (Monascus ruber (Mold)).